The primary structure comprises 195 residues: Large ribosomal subunit protein eL18 (195 aa).

A Glycyl lysine isopeptide (Lys-Gly) (interchain with G-Cter in SUMO2) cross-link involves residue K126. Phosphoserine is present on S137. Residues 158 to 195 form a disordered region; the sequence is HFGKAPGTPHSHTKPYVRSKGRKFERARGRRASRGYKN. T165 carries the post-translational modification Phosphothreonine. 2 stretches are compositionally biased toward basic residues: residues 168-178 and 185-195; these read SHTKPYVRSKG and RGRRASRGYKN. K171 is covalently cross-linked (Glycyl lysine isopeptide (Lys-Gly) (interchain with G-Cter in SUMO2)).

Belongs to the eukaryotic ribosomal protein eL18 family. In terms of assembly, component of the large ribosomal subunit.

The protein localises to the cytoplasm. It localises to the cytosol. Its subcellular location is the rough endoplasmic reticulum. Functionally, component of the large ribosomal subunit. The protein is Large ribosomal subunit protein eL18 (RPL18) of Sus scrofa (Pig).